We begin with the raw amino-acid sequence, 671 residues long: DNA ligase (671 aa).

Residues 31–35, 80–81, and Glu110 contribute to the NAD(+) site; these read DAEYD and SL. Lys112 acts as the N6-AMP-lysine intermediate in catalysis. Positions 133, 167, 283, and 307 each coordinate NAD(+). Zn(2+) contacts are provided by Cys401, Cys404, Cys419, and Cys424. The region spanning 587–671 is the BRCT domain; sequence EEELVFTGKT…YLPDEGGLNE (85 aa).

The protein belongs to the NAD-dependent DNA ligase family. LigA subfamily. The cofactor is Mg(2+). Mn(2+) serves as cofactor.

It carries out the reaction NAD(+) + (deoxyribonucleotide)n-3'-hydroxyl + 5'-phospho-(deoxyribonucleotide)m = (deoxyribonucleotide)n+m + AMP + beta-nicotinamide D-nucleotide.. Its function is as follows. DNA ligase that catalyzes the formation of phosphodiester linkages between 5'-phosphoryl and 3'-hydroxyl groups in double-stranded DNA using NAD as a coenzyme and as the energy source for the reaction. It is essential for DNA replication and repair of damaged DNA. The chain is DNA ligase from Listeria monocytogenes serotype 4b (strain F2365).